Reading from the N-terminus, the 631-residue chain is Plastidic ATP/ADP-transporter (631 aa).

11 consecutive transmembrane segments (helical) span residues 106–126, 149–169, 180–200, 238–258, 271–290, 313–333, 369–389, 407–427, 442–462, 465–485, and 543–563; these read IELVTLKKIIPLGAMFFCILF, IIPFLKTWVNLPMAIGFMLLY, ALFYTVILPFIAFFGAFGFVL, LFYVMAELWGSVVVSVLFWGF, FYPLFGLGANVALIFSGRTV, GMMSIVVMMGGAICFFYWWVN, LATLVVAYGISINLVEVTWKS, DFSTATGIATFTMMLLSQWIF, VLLLTGVGFFSLLLFGAPLAP, AKFGMTPLLAAVYVGAMQNIF, and LASSTPYLGGVLLVIVLAWLG. The segment at 586-631 is disordered; sequence ERASLKIPVVSQNENGNGPLSSESSLNPAGGDSTNASSEPSSPRSL. Positions 595 to 631 are enriched in polar residues; it reads VSQNENGNGPLSSESSLNPAGGDSTNASSEPSSPRSL.

Belongs to the ADP/ATP translocase tlc (TC 2.A.12.2) family.

The protein resides in the plastid. The protein localises to the chloroplast membrane. This is Plastidic ATP/ADP-transporter from Solanum tuberosum (Potato).